Here is an 85-residue protein sequence, read N- to C-terminus: Alpha-mammal toxin AaH2 (85 aa).

The signal sequence occupies residues 1–19 (MNYLVMISLALLFVTGVES). Residues 21–83 (KDGYIVDDVN…VRTKGPGRCH (63 aa)) enclose the LCN-type CS-alpha/beta domain. Disulfide bonds link Cys31-Cys82, Cys35-Cys55, Cys41-Cys65, and Cys45-Cys67. Position 83 is a histidine amide (His83).

The protein belongs to the long (4 C-C) scorpion toxin superfamily. Sodium channel inhibitor family. Alpha subfamily. In terms of processing, the amidation of His-83 is not necessary for toxicity. In terms of tissue distribution, expressed by the venom gland.

The protein localises to the secreted. In terms of biological role, alpha toxin that binds voltage-independently at site-3 of sodium channels (Nav), inhibits the inactivation of the activated channels, and weakly inhibits activation, thereby blocking neuronal transmission. Inserts into voltage-sensing domain IV to stabilize a deactivated state, thereby preventing fast-inactivation. Principally slows the inactivation process of TTX-sensitive sodium channels. It is active on mammalian brain Nav1.2/SCN2A (EC(50)human=0.72 nM, EC(50)rat=2.6 nM), on rat skeletal muscle Nav1.4/SCN4A (EC(50)=2.2 nM), and on human neuronal Nav1.7/SCN9A (EC(50)=6.8-51.7 nM). In vivo, intraplantar injection into mice induces spontaneous pain responses. This is Alpha-mammal toxin AaH2 from Androctonus australis (Sahara scorpion).